A 510-amino-acid polypeptide reads, in one-letter code: Arginine biosynthesis bifunctional protein ArgJ, chloroplastic (510 aa).

Positions 223, 249, 359, 505, and 510 each coordinate substrate.

The protein belongs to the ArgJ family. As to quaternary structure, heterodimer of an alpha and a beta chain.

Its subcellular location is the plastid. The protein resides in the chloroplast. It carries out the reaction N(2)-acetyl-L-ornithine + L-glutamate = N-acetyl-L-glutamate + L-ornithine. It catalyses the reaction L-glutamate + acetyl-CoA = N-acetyl-L-glutamate + CoA + H(+). Its pathway is amino-acid biosynthesis; L-arginine biosynthesis; L-ornithine and N-acetyl-L-glutamate from L-glutamate and N(2)-acetyl-L-ornithine (cyclic): step 1/1. It functions in the pathway amino-acid biosynthesis; L-arginine biosynthesis; N(2)-acetyl-L-ornithine from L-glutamate: step 1/4. Catalyzes two activities which are involved in the cyclic version of arginine biosynthesis: the synthesis of acetylglutamate from glutamate and acetyl-CoA, and of ornithine by transacetylation between acetylornithine and glutamate. This Vitis vinifera (Grape) protein is Arginine biosynthesis bifunctional protein ArgJ, chloroplastic.